Here is a 96-residue protein sequence, read N- to C-terminus: Protein CLAVATA 3 (96 aa).

Positions M1–A21 are cleaved as a signal peptide. Residues E68–P96 are disordered. A hydroxyproline mark is found at P73 and P76. P76 is a glycosylation site (O-linked (Ara...) hydroxyproline).

The protein belongs to the CLV3/ESR signal peptide family. Interacts with the extracellular leucine-rich repeat region of CLV1. Interacts with CLV2. CLV3-derived CLE peptides interacts with a tetrameric complex made of two CLV2/CRN heterodimers. The MCLV3 peptide contains two hydroxyprolines, but hydroxylation had no direct effect on MCLV3 activity. Post-translationally, the O-glycosylation (arabinosylation) of the hydroxyproline P-76 enhances binding affinity of the MCLV3 peptide for its receptor. In terms of tissue distribution, first detected in heart stage embryos in a patch of cells between the developing cotyledons. In vegetative and inflorescence meristems, expressed in a small cone of cells at the meristem apex.

The protein resides in the secreted. The protein localises to the extracellular space. Extracellular signal that regulates meristem maintenance. Acts with CLV1 as a ligand-receptor pair in a signal transduction pathway coordinating growth between adjacent meristematic regions and controlling the balance between meristem cell proliferation and differentiation. Functionally, the secreted peptide MCLV3 activates a signal transduction cascade to restrict WUSCHEL (WUS) expression, inducing shoot and root meristem consumption as cells differentiated into other organs. This chain is Protein CLAVATA 3, found in Arabidopsis thaliana (Mouse-ear cress).